A 55-amino-acid chain; its full sequence is Ovomucoid (55 aa).

The Kazal-like domain occupies 5–55 (VDCSEHPKPACTLDYRPICGSDSKTYSNKCDFCNAVMDSNGTLTLSHFGKC). 3 disulfide bridges follow: C7–C37, C15–C34, and C23–C55. An N-linked (GlcNAc...) asparagine glycan is attached at N44.

It localises to the secreted. This is Ovomucoid from Dacelo novaeguineae (Laughing kookaburra).